The sequence spans 163 residues: SsrA-binding protein (163 aa).

Basic and acidic residues predominate over residues 135-156; that stretch reads GKKEHDKRDDTKEREWKIEKSR. A disordered region spans residues 135–163; the sequence is GKKEHDKRDDTKEREWKIEKSRTMKHAAR.

The protein belongs to the SmpB family.

Its subcellular location is the cytoplasm. Its function is as follows. Required for rescue of stalled ribosomes mediated by trans-translation. Binds to transfer-messenger RNA (tmRNA), required for stable association of tmRNA with ribosomes. tmRNA and SmpB together mimic tRNA shape, replacing the anticodon stem-loop with SmpB. tmRNA is encoded by the ssrA gene; the 2 termini fold to resemble tRNA(Ala) and it encodes a 'tag peptide', a short internal open reading frame. During trans-translation Ala-aminoacylated tmRNA acts like a tRNA, entering the A-site of stalled ribosomes, displacing the stalled mRNA. The ribosome then switches to translate the ORF on the tmRNA; the nascent peptide is terminated with the 'tag peptide' encoded by the tmRNA and targeted for degradation. The ribosome is freed to recommence translation, which seems to be the essential function of trans-translation. The sequence is that of SsrA-binding protein from Shewanella loihica (strain ATCC BAA-1088 / PV-4).